A 143-amino-acid polypeptide reads, in one-letter code: Putative pre-16S rRNA nuclease (143 aa).

This sequence belongs to the YqgF nuclease family.

Its subcellular location is the cytoplasm. Functionally, could be a nuclease involved in processing of the 5'-end of pre-16S rRNA. The sequence is that of Putative pre-16S rRNA nuclease (ybeB) from Lactococcus lactis subsp. lactis (strain IL1403) (Streptococcus lactis).